We begin with the raw amino-acid sequence, 332 residues long: Biotin synthase (332 aa).

The Radical SAM core domain maps to 52 to 282; sequence FPENEVEFCS…KAELRLCGGR (231 aa). 3 residues coordinate [4Fe-4S] cluster: cysteine 70, cysteine 74, and cysteine 77. Residues cysteine 114, cysteine 147, cysteine 207, and arginine 277 each contribute to the [2Fe-2S] cluster site.

It belongs to the radical SAM superfamily. Biotin synthase family. In terms of assembly, homodimer. It depends on [4Fe-4S] cluster as a cofactor. The cofactor is [2Fe-2S] cluster.

It catalyses the reaction (4R,5S)-dethiobiotin + (sulfur carrier)-SH + 2 reduced [2Fe-2S]-[ferredoxin] + 2 S-adenosyl-L-methionine = (sulfur carrier)-H + biotin + 2 5'-deoxyadenosine + 2 L-methionine + 2 oxidized [2Fe-2S]-[ferredoxin]. It participates in cofactor biosynthesis; biotin biosynthesis; biotin from 7,8-diaminononanoate: step 2/2. Functionally, catalyzes the conversion of dethiobiotin (DTB) to biotin by the insertion of a sulfur atom into dethiobiotin via a radical-based mechanism. In Aquifex aeolicus (strain VF5), this protein is Biotin synthase.